We begin with the raw amino-acid sequence, 330 residues long: Phosphate acyltransferase (330 aa).

It belongs to the PlsX family. In terms of assembly, homodimer. Probably interacts with PlsY.

It is found in the cytoplasm. The enzyme catalyses a fatty acyl-[ACP] + phosphate = an acyl phosphate + holo-[ACP]. Its pathway is lipid metabolism; phospholipid metabolism. Its function is as follows. Catalyzes the reversible formation of acyl-phosphate (acyl-PO(4)) from acyl-[acyl-carrier-protein] (acyl-ACP). This enzyme utilizes acyl-ACP as fatty acyl donor, but not acyl-CoA. In Streptococcus agalactiae serotype Ia (strain ATCC 27591 / A909 / CDC SS700), this protein is Phosphate acyltransferase.